Consider the following 157-residue polypeptide: MNDVVKIVEDFIRPHIPQPFELFAVEWEKFGGDMMLSILVDKEGGIEIDETAELSEIISPLLDTISPDPFPTEGYLLEVASPGAERPLRKAEHFAGAVGEYIFVKLYQKINNEKEITGDLVSFDGETLVVDVLDKTRHKNIEIPLSAVAKAQTMVKF.

Belongs to the RimP family.

Its subcellular location is the cytoplasm. Functionally, required for maturation of 30S ribosomal subunits. The chain is Ribosome maturation factor RimP from Lactococcus lactis subsp. lactis (strain IL1403) (Streptococcus lactis).